Here is a 338-residue protein sequence, read N- to C-terminus: Nicotinate-nucleotide--dimethylbenzimidazole phosphoribosyltransferase (338 aa).

The active-site Proton acceptor is E305.

Belongs to the CobT family.

It carries out the reaction 5,6-dimethylbenzimidazole + nicotinate beta-D-ribonucleotide = alpha-ribazole 5'-phosphate + nicotinate + H(+). The protein operates within nucleoside biosynthesis; alpha-ribazole biosynthesis; alpha-ribazole from 5,6-dimethylbenzimidazole: step 1/2. In terms of biological role, catalyzes the synthesis of alpha-ribazole-5'-phosphate from nicotinate mononucleotide (NAMN) and 5,6-dimethylbenzimidazole (DMB). This Rhizobium johnstonii (strain DSM 114642 / LMG 32736 / 3841) (Rhizobium leguminosarum bv. viciae) protein is Nicotinate-nucleotide--dimethylbenzimidazole phosphoribosyltransferase.